A 255-amino-acid polypeptide reads, in one-letter code: MFKVRVIPCLDVKDGRVVKGINFVDLRDAGDPVEAAIAYDAAGADELTFLDITATHENRGIMLDVVRRTAEACFMPLTVGGGVRTVDDIKTLLRSGADKVSINSAAVARREFVKEAAEKFGEQCIVVAIDAKRVPGKDRWEIFTHGGRKGTGIDAIDYAQEVVSLGAGEILLTSMDRDGTRQGFDIPLTSAIADSVPVPVIASGGVGNLDHLVEGIAKGHATAVLAASIFHFGEFTIRQAKEHMVRSGLPMRLDP.

Residues aspartate 11 and aspartate 130 contribute to the active site.

Belongs to the HisA/HisF family. Heterodimer of HisH and HisF.

Its subcellular location is the cytoplasm. The catalysed reaction is 5-[(5-phospho-1-deoxy-D-ribulos-1-ylimino)methylamino]-1-(5-phospho-beta-D-ribosyl)imidazole-4-carboxamide + L-glutamine = D-erythro-1-(imidazol-4-yl)glycerol 3-phosphate + 5-amino-1-(5-phospho-beta-D-ribosyl)imidazole-4-carboxamide + L-glutamate + H(+). The protein operates within amino-acid biosynthesis; L-histidine biosynthesis; L-histidine from 5-phospho-alpha-D-ribose 1-diphosphate: step 5/9. Functionally, IGPS catalyzes the conversion of PRFAR and glutamine to IGP, AICAR and glutamate. The HisF subunit catalyzes the cyclization activity that produces IGP and AICAR from PRFAR using the ammonia provided by the HisH subunit. In Rhodopseudomonas palustris (strain BisA53), this protein is Imidazole glycerol phosphate synthase subunit HisF.